The primary structure comprises 233 residues: MASRQSPMAVSQPDHADRSAALQLTPVSRETERRLDAYLDLLRQWQAKTNLVAPSTLPQLWTRHVADSLQLLTLAPDARRWLDFGSGGGFPGIVLACAMAEHDGGHVTLVERNAKKAAFLREALRVTGSPGTVMLADIGDNVDRFPQGLDCITARAVAPLHQLIGFARPLMTEGSKALFLKGQDVEAELTEATRYWKIDPQLHASLTGGHGWIVEIDRIERQALPTASKEAAQ.

Residues 1–25 (MASRQSPMAVSQPDHADRSAALQLT) form a disordered region. The S-adenosyl-L-methionine site is built by G85, F90, and R155.

This sequence belongs to the methyltransferase superfamily. RNA methyltransferase RsmG family.

It is found in the cytoplasm. It carries out the reaction guanosine(527) in 16S rRNA + S-adenosyl-L-methionine = N(7)-methylguanosine(527) in 16S rRNA + S-adenosyl-L-homocysteine. Functionally, specifically methylates the N7 position of guanine in position 527 of 16S rRNA. The chain is Ribosomal RNA small subunit methyltransferase G from Rhodopseudomonas palustris (strain BisB5).